Consider the following 284-residue polypeptide: Adenylate kinase 1, chloroplastic (284 aa).

The transit peptide at 1–36 (MARLVRVARSSSLFGFGNRFYSTSAEASHASSPSPF) directs the protein to the chloroplast. 61 to 66 (GVGKGT) lines the ATP pocket. The segment at 81–110 (ATGDLVREELASSGPLSQKLSEIVNQGKLV) is NMP. Residues threonine 82, arginine 87, 108 to 110 (KLV), 138 to 141 (GFPR), and glutamine 145 each bind AMP. Residues 174 to 222 (GRRTCSQCGKGFNVAHINLKGENGRPGISMDPLLPPHQCMSKLVTRADD) form an LID region. Arginine 175 is an ATP binding site. AMP contacts are provided by arginine 219 and arginine 230. Glycine 258 provides a ligand contact to ATP.

It belongs to the adenylate kinase family. As to quaternary structure, monomer. Highly expressed in flowers and at lower levels in roots, leaves and stems.

The protein localises to the plastid. The protein resides in the chloroplast stroma. It catalyses the reaction AMP + ATP = 2 ADP. Catalyzes the reversible transfer of the terminal phosphate group between ATP and AMP. Plays an important role in cellular energy homeostasis, adenine nucleotide metabolism and plant growth. This chain is Adenylate kinase 1, chloroplastic (ADK), found in Arabidopsis thaliana (Mouse-ear cress).